The following is a 322-amino-acid chain: uncharacterized protein (322 aa).

It to M.jannaschii MJ0640 and MJ0799.

This is an uncharacterized protein from Synechocystis sp. (strain ATCC 27184 / PCC 6803 / Kazusa).